The sequence spans 649 residues: Putative calpain-like cysteine protease A (649 aa).

A propeptide spanning residues 1–3 is cleaved from the precursor; the sequence is MLT. 2 disordered regions span residues 1–22 and 124–193; these read MLTT…SSPS and PLSN…SMPA. The C2 domain maps to 15–123; sequence TTTTSSPSSD…LHANGEAKWY (109 aa). Residues 140–149 show a composition bias toward low complexity; that stretch reads ITNSNNKDNN. Basic and acidic residues predominate over residues 159–172; it reads AQEKGDEDQHHSAD. Domain III regions lie at residues 458 to 489 and 498 to 633; these read EGTY…NATF and EVEQ…ISLD.

Belongs to the peptidase C2 family. In terms of assembly, monomer. Post-translationally, undergoes autolytic cleavage between Pro-192 and Ala-193.

The protein resides in the cytoplasm. It localises to the cytosol. In terms of biological role, has a weak caseinolytic activity. The polypeptide is Putative calpain-like cysteine protease A (cplA) (Dictyostelium discoideum (Social amoeba)).